The sequence spans 561 residues: Potassium-transporting ATPase potassium-binding subunit (561 aa).

Transmembrane regions (helical) follow at residues 4-24, 65-85, 133-153, 177-197, 253-273, 285-305, 380-400, 417-437, 484-504, and 528-548; these read IVMQ…PLGI, AVSV…VLML, IGLT…LFAV, LYIL…QGVV, FTNL…VVMF, AIMT…TISE, GLYG…LLVG, MVCL…AVAV, MVGA…ALYL, and FIGL…LPAL.

Belongs to the KdpA family. The system is composed of three essential subunits: KdpA, KdpB and KdpC.

The protein localises to the cell membrane. Functionally, part of the high-affinity ATP-driven potassium transport (or Kdp) system, which catalyzes the hydrolysis of ATP coupled with the electrogenic transport of potassium into the cytoplasm. This subunit binds the extracellular potassium ions and delivers the ions to the membrane domain of KdpB through an intramembrane tunnel. The sequence is that of Potassium-transporting ATPase potassium-binding subunit from Listeria monocytogenes serovar 1/2a (strain ATCC BAA-679 / EGD-e).